The following is a 572-amino-acid chain: Proline--tRNA ligase (572 aa).

The protein belongs to the class-II aminoacyl-tRNA synthetase family. ProS type 1 subfamily. Homodimer.

It localises to the cytoplasm. The catalysed reaction is tRNA(Pro) + L-proline + ATP = L-prolyl-tRNA(Pro) + AMP + diphosphate. Its function is as follows. Catalyzes the attachment of proline to tRNA(Pro) in a two-step reaction: proline is first activated by ATP to form Pro-AMP and then transferred to the acceptor end of tRNA(Pro). As ProRS can inadvertently accommodate and process non-cognate amino acids such as alanine and cysteine, to avoid such errors it has two additional distinct editing activities against alanine. One activity is designated as 'pretransfer' editing and involves the tRNA(Pro)-independent hydrolysis of activated Ala-AMP. The other activity is designated 'posttransfer' editing and involves deacylation of mischarged Ala-tRNA(Pro). The misacylated Cys-tRNA(Pro) is not edited by ProRS. The polypeptide is Proline--tRNA ligase (Haemophilus influenzae (strain PittEE)).